The sequence spans 542 residues: Putative ankyrin repeat protein FPV115 (542 aa).

ANK repeat units lie at residues 33-62 (FRNLPLHYAIYSRRKDIVETLLKSGYDPNS), 157-186 (DGLLPLYHAAAAGNTEMVELLLSYGAKTNL), 218-247 (NDINNILKTIQLYNADMLLFLIEIGLDINT), 251-281 (KGKTALHYACNSINCIETVKEIMKYGADINV), 285-314 (EGLTPLHSACKYGDLKLSKLLIEYGADVKV), 316-345 (TTSTVLNLAVESGNVELVKFLIEKNPEFIT), 347-375 (DYLSLSLAIRCKDINIVLLLLDAGMDVNS), and 378-407 (CISTPLHLGVILGNSNIVKLLLDHGANINA).

In Fowlpox virus (strain NVSL) (FPV), this protein is Putative ankyrin repeat protein FPV115.